A 254-amino-acid chain; its full sequence is Myeloblastin (254 aa).

The signal sequence occupies residues 1–27; it reads MSGSYPSPKGIHPFLLLALVVGGAVQA. The propeptide occupies 28 to 29; the sequence is SK. A Peptidase S1 domain is found at 30–250; sequence IVGGHEARPH…YVDWIQNVLR (221 aa). Residues Cys-58 and Cys-74 are joined by a disulfide bond. Catalysis depends on charge relay system residues His-73 and Asp-120. Residues Asn-127 and Asn-176 are each glycosylated (N-linked (GlcNAc...) asparagine). 3 disulfide bridges follow: Cys-154–Cys-211, Cys-184–Cys-190, and Cys-201–Cys-226. The active-site Charge relay system is Ser-205. Residues 251 to 254 constitute a propeptide that is removed on maturation; it reads GAEP.

It belongs to the peptidase S1 family. Elastase subfamily. As to quaternary structure, may form dimers. Interacts with CD177; the interaction tethers PRTN3 to the cell surface; the interaction is direct. Interacts with SERPINB1. Interacts with ADGRG3.

The protein resides in the lysosome. It localises to the secreted. Its subcellular location is the cell membrane. The protein localises to the membrane raft. The enzyme catalyses Hydrolysis of proteins, including elastin, by preferential cleavage: -Ala-|-Xaa- &gt; -Val-|-Xaa-.. Functionally, serine protease that degrades elastin, fibronectin, laminin, vitronectin, and collagen types I, III, and IV (in vitro). By cleaving and activating receptor F2RL1/PAR-2, enhances endothelial cell barrier function and thus vascular integrity during neutrophil transendothelial migration. May play a role in neutrophil transendothelial migration, probably when associated with CD177. Triggers inflammatory processes in neutrophils by interacting with ADGRG3 upstream of F2RL1/PAR2 activation. The polypeptide is Myeloblastin (Prtn3) (Mus musculus (Mouse)).